Here is a 225-residue protein sequence, read N- to C-terminus: Uridylate kinase (225 aa).

9–10 (GS) is a binding site for ATP. Gly-46 lines the UMP pocket. 2 residues coordinate ATP: Gly-47 and Arg-51. Residues Asp-67 and 115–121 (THPAHTT) contribute to the UMP site. The ATP site is built by Thr-141, Asn-142, Tyr-147, and Asp-150.

Belongs to the UMP kinase family. Homohexamer.

Its subcellular location is the cytoplasm. It carries out the reaction UMP + ATP = UDP + ADP. The protein operates within pyrimidine metabolism; CTP biosynthesis via de novo pathway; UDP from UMP (UMPK route): step 1/1. Inhibited by UTP. Functionally, catalyzes the reversible phosphorylation of UMP to UDP. The chain is Uridylate kinase from Methanococcus maripaludis (strain DSM 14266 / JCM 13030 / NBRC 101832 / S2 / LL).